The primary structure comprises 200 residues: Matrix protein (200 aa).

As to quaternary structure, homomultimer. Interacts with viral nucleocapsid.

The protein localises to the virion membrane. The protein resides in the host endomembrane system. It is found in the host nucleus membrane. In terms of biological role, plays a major role in assembly and budding of virion, by recruiting cellular partners of the ESCRT complexes that play a key role in releasing the budding particle from the host membrane. Condensates the ribonucleocapsid core during virus assembly. This chain is Matrix protein (M), found in Tupaia (TUPV).